We begin with the raw amino-acid sequence, 279 residues long: Protein PHOTOPERIODIC CONTROL OF HYPOCOTYL 1-LIKE (279 aa).

As to quaternary structure, interacts with light-activated phyB. Binds directly to PIF1 and COP1. Post-translationally, ubiquitinated by COP1 in darkness; this leads to proteasomal degradation. As to expression, mainly expressed in cotyledons, hypocotyls, leaves.

The protein resides in the nucleus. Functionally, together with PCH1, regulates growth and development adaptation to the ambient environment by controlling negatively phytochrome B (phyB) dark reversion, a temperature-dependent thermal relaxation process during which phyB reverts from the active to the inactive state. Contributes to red (R) light-triggered photomorphogenesis. Promotes various light responses such as seed germination, hypocotyl gravitropism and chlorophyll biosynthesis, via direct interaction with PIF1 and COP1. Prevents DNA-binding ability of PIF1 to negatively regulate the expressions of its target genes. Facilitates the physical interaction between phyB and PIF1 and the subsequent light-induced degradation of PIF1. This chain is Protein PHOTOPERIODIC CONTROL OF HYPOCOTYL 1-LIKE, found in Arabidopsis thaliana (Mouse-ear cress).